We begin with the raw amino-acid sequence, 87 residues long: Large ribosomal subunit protein bL27 (87 aa).

The segment at Met1–Leu21 is disordered.

The protein belongs to the bacterial ribosomal protein bL27 family.

The polypeptide is Large ribosomal subunit protein bL27 (Paraburkholderia xenovorans (strain LB400)).